The chain runs to 281 residues: Apulose-4-phosphate transketolase subunit A (281 aa).

It belongs to the transketolase family. Probable heterodimer composed of AptA and AptB. Thiamine diphosphate serves as cofactor.

It carries out the reaction apulose 4-phosphate + D-glyceraldehyde 3-phosphate = D-xylulose 5-phosphate + dihydroxyacetone phosphate. The protein operates within carbohydrate metabolism. Involved in catabolism of D-apiose. Catalyzes the transfer of the glycolaldehyde group from apulose-4-phosphate to D-glyceraldehyde 3-phosphate, generating dihydroxyacetone phosphate and D-xylulose-5-phosphate. This chain is Apulose-4-phosphate transketolase subunit A, found in Phocaeicola vulgatus (strain ATCC 8482 / DSM 1447 / JCM 5826 / CCUG 4940 / NBRC 14291 / NCTC 11154) (Bacteroides vulgatus).